Reading from the N-terminus, the 1369-residue chain is Rho guanine nucleotide exchange factor 10 (1369 aa).

Residues 1-106 are disordered; the sequence is MRPPGFLSRA…ETTPVAEPTK (106 aa). Residues 46–64 are compositionally biased toward acidic residues; the sequence is NNEEEEGEQFDFDSGDEIP. Over residues 83 to 100 the composition is skewed to low complexity; it reads EAPAPTGGEDGAGAETTP. A Phosphoserine modification is found at serine 180. Residues 184 to 254 are disordered; it reads EAETPEVTED…ENSDSEPDEM (71 aa). Residues 196–209 show a composition bias toward polar residues; it reads PNSLSSEEPPTSED. Residues 304 to 355 are a coiled coil; the sequence is KKQLSHDLTRLKEHYEKKMRDLMASTVGVVEIQQLRQKHELKMQKLVKAAKD. Serine 379 bears the Phosphoserine mark. Residues 421–608 form the DH domain; sequence VRRYILGSVV…ETLAEKLNER (188 aa). 2 disordered regions span residues 1226–1260 and 1277–1297; these read KDKS…LSQG and QKSD…SSSL. The span at 1279 to 1296 shows a compositional bias: low complexity; it reads SDLSSSSGSLSLSHGSSS. A Phosphoserine modification is found at serine 1287. Residue glutamine 1338 is modified to N5-methylglutamine.

Methylated at Gln-1338 by N6AMT1.

Functionally, may play a role in developmental myelination of peripheral nerves. In Homo sapiens (Human), this protein is Rho guanine nucleotide exchange factor 10 (ARHGEF10).